The sequence spans 87 residues: U3-theraphotoxin-Hhn1o (87 aa).

Residues 1-24 (MVNMKASMFLTFAGLVLLFVVCYA) form the signal peptide. Positions 25–52 (SESEEKEFPKEMLSSIFAVDNDFKQEER) are excised as a propeptide. 2 disulfides stabilise this stretch: cysteine 54-cysteine 67 and cysteine 61-cysteine 72.

Belongs to the neurotoxin 10 (Hwtx-1) family. 51 (Hntx-8) subfamily. Hntx-8 sub-subfamily. Expressed by the venom gland.

It localises to the secreted. Its function is as follows. Ion channel inhibitor. This is U3-theraphotoxin-Hhn1o from Cyriopagopus hainanus (Chinese bird spider).